The sequence spans 200 residues: Dipicolinate synthase subunit B (200 aa).

Dipicolinate synthase likely consists of DpaA and DpaB, since both proteins are required for DPA synthesis.

The catalysed reaction is (S)-2,3-dihydrodipicolinate + NADP(+) = dipicolinate + NADPH + H(+). Its function is as follows. Together with DpaA, catalyzes the conversion of dihydrodipicolinate to dipicolinate (DPA), which constitutes up to 10% of the dry weight of the spore. The protein is Dipicolinate synthase subunit B (dpaB) of Bacillus subtilis (strain 168).